The primary structure comprises 269 residues: Formamidopyrimidine-DNA glycosylase (269 aa).

The active-site Schiff-base intermediate with DNA is Pro-2. Residue Glu-3 is the Proton donor of the active site. Lys-57 (proton donor; for beta-elimination activity) is an active-site residue. Positions 90, 109, and 150 each coordinate DNA. Residues 235 to 269 (QVYGRKGEPCRVCGTPVVATKHAQRATFYCRHCQK) form an FPG-type zinc finger. The active-site Proton donor; for delta-elimination activity is the Arg-259.

This sequence belongs to the FPG family. In terms of assembly, monomer. It depends on Zn(2+) as a cofactor.

It carries out the reaction Hydrolysis of DNA containing ring-opened 7-methylguanine residues, releasing 2,6-diamino-4-hydroxy-5-(N-methyl)formamidopyrimidine.. It catalyses the reaction 2'-deoxyribonucleotide-(2'-deoxyribose 5'-phosphate)-2'-deoxyribonucleotide-DNA = a 3'-end 2'-deoxyribonucleotide-(2,3-dehydro-2,3-deoxyribose 5'-phosphate)-DNA + a 5'-end 5'-phospho-2'-deoxyribonucleoside-DNA + H(+). Functionally, involved in base excision repair of DNA damaged by oxidation or by mutagenic agents. Acts as a DNA glycosylase that recognizes and removes damaged bases. Has a preference for oxidized purines, such as 7,8-dihydro-8-oxoguanine (8-oxoG). Has AP (apurinic/apyrimidinic) lyase activity and introduces nicks in the DNA strand. Cleaves the DNA backbone by beta-delta elimination to generate a single-strand break at the site of the removed base with both 3'- and 5'-phosphates. In Salmonella arizonae (strain ATCC BAA-731 / CDC346-86 / RSK2980), this protein is Formamidopyrimidine-DNA glycosylase.